The following is an 842-amino-acid chain: Alanine--tRNA ligase (842 aa).

4 residues coordinate Zn(2+): His549, His553, Cys650, and His654.

The protein belongs to the class-II aminoacyl-tRNA synthetase family. Zn(2+) is required as a cofactor.

It localises to the cytoplasm. The enzyme catalyses tRNA(Ala) + L-alanine + ATP = L-alanyl-tRNA(Ala) + AMP + diphosphate. In terms of biological role, catalyzes the attachment of alanine to tRNA(Ala) in a two-step reaction: alanine is first activated by ATP to form Ala-AMP and then transferred to the acceptor end of tRNA(Ala). Also edits incorrectly charged Ser-tRNA(Ala) and Gly-tRNA(Ala) via its editing domain. In Campylobacter jejuni subsp. doylei (strain ATCC BAA-1458 / RM4099 / 269.97), this protein is Alanine--tRNA ligase.